Consider the following 419-residue polypeptide: MARAAGARGPAGWCRRRGRCGRGTLLAFAAWTAGWVLAAALLLRAHPGVLSERCTDEKSRRILAALCQDYQGGTLAGDLCEDLCVAGELLFQRCLHYNRGKKVLQADWRGRPVVLKSKEEAFSSFPPLSLLEEEAGEGGQDMPEAELLLMVAGEVKSALGLELSNSSLGPWWPGRRGPRWRGQLASLWALLQQEEYVYFSLLQDLSPHVLPVLGSCGHFYAVEFLAAGSPHHRALFPLDRAPGAPGGGQAKAISDIALSFLDMVNHFDSDFSHRLHLCDIKPENFAIRSDFTVVAIDVDMAFFEPKMREILEQNCTGDEDCNFFDCFSRCDLRVNKCGAQRVNNNLQVICDKIFRHWFSAPLKSSAVSFQLQLQLQEAVQECADPGVPSGNTRRAASSVFWKLRQLLQATLRELQEAEK.

Residues Met1–Arg22 are Cytoplasmic-facing. A May mediate ER retention motif is present at residues Arg16–Arg17. A helical membrane pass occupies residues Gly23–Leu43. Residues Arg44–Lys419 are Lumenal-facing.

The protein belongs to the DIPK family. Post-translationally, among the many cysteines in the lumenal domain, most are probably involved in disulfide bonds.

It is found in the endoplasmic reticulum membrane. The chain is Divergent protein kinase domain 1C from Homo sapiens (Human).